The chain runs to 320 residues: uncharacterized protein (320 aa).

46 to 53 (DVPGVGKT) serves as a coordination point for ATP.

The protein belongs to the MoxR family.

This is an uncharacterized protein from Bacillus subtilis (strain 168).